The following is a 184-amino-acid chain: Photosystem I assembly protein Ycf4 (184 aa).

The next 2 helical transmembrane spans lie at 22–42 (FFWA…GTSS) and 57–77 (IPFF…LFIS).

The protein belongs to the Ycf4 family.

Its subcellular location is the plastid. The protein localises to the chloroplast thylakoid membrane. In terms of biological role, seems to be required for the assembly of the photosystem I complex. The protein is Photosystem I assembly protein Ycf4 of Ceratophyllum demersum (Rigid hornwort).